The chain runs to 236 residues: Phosphoribosylaminoimidazole-succinocarboxamide synthase (236 aa).

This sequence belongs to the SAICAR synthetase family.

It carries out the reaction 5-amino-1-(5-phospho-D-ribosyl)imidazole-4-carboxylate + L-aspartate + ATP = (2S)-2-[5-amino-1-(5-phospho-beta-D-ribosyl)imidazole-4-carboxamido]succinate + ADP + phosphate + 2 H(+). The protein operates within purine metabolism; IMP biosynthesis via de novo pathway; 5-amino-1-(5-phospho-D-ribosyl)imidazole-4-carboxamide from 5-amino-1-(5-phospho-D-ribosyl)imidazole-4-carboxylate: step 1/2. This is Phosphoribosylaminoimidazole-succinocarboxamide synthase from Pseudomonas syringae pv. tomato (strain ATCC BAA-871 / DC3000).